Reading from the N-terminus, the 715-residue chain is Polyribonucleotide nucleotidyltransferase (715 aa).

Mg(2+) is bound by residues aspartate 495 and aspartate 501. The KH domain occupies 562–621; sequence PRLLTLQIPPDMIGLVIGPGGKTVRGISEQYNVKVDISEEGLVTITAPNETNAKQARAAI. The S1 motif domain maps to 631-699; sequence GDVYLGRVTR…SKGRINLTRL (69 aa).

The protein belongs to the polyribonucleotide nucleotidyltransferase family. Requires Mg(2+) as cofactor.

The protein resides in the cytoplasm. It catalyses the reaction RNA(n+1) + phosphate = RNA(n) + a ribonucleoside 5'-diphosphate. Functionally, involved in mRNA degradation. Catalyzes the phosphorolysis of single-stranded polyribonucleotides processively in the 3'- to 5'-direction. This Thermosynechococcus vestitus (strain NIES-2133 / IAM M-273 / BP-1) protein is Polyribonucleotide nucleotidyltransferase.